The sequence spans 224 residues: Metalloproteinase inhibitor 4 (224 aa).

The N-terminal stretch at 1 to 29 is a signal peptide; that stretch reads MPQSPRPVPSWALLLRLLALLRPPGLGEA. Cys30 contacts Zn(2+). 2 involved in metalloproteinase-binding regions span residues 30-33 and 99-100; these read CSCA and SS. 6 cysteine pairs are disulfide-bonded: Cys30–Cys102, Cys32–Cys131, Cys42–Cys156, Cys158–Cys205, Cys163–Cys168, and Cys176–Cys197. Positions 30–156 constitute an NTR domain; it reads CSCAPAHPQQ…SLNHHYHLNC (127 aa).

The protein belongs to the protease inhibitor I35 (TIMP) family.

The protein resides in the secreted. Its function is as follows. Complexes with metalloproteinases (such as collagenases) and irreversibly inactivates them by binding to their catalytic zinc cofactor. The chain is Metalloproteinase inhibitor 4 (TIMP4) from Bos taurus (Bovine).